Here is a 119-residue protein sequence, read N- to C-terminus: Phosphoribosyl-AMP cyclohydrolase (119 aa).

Aspartate 77 serves as a coordination point for Mg(2+). Cysteine 78 is a Zn(2+) binding site. 2 residues coordinate Mg(2+): aspartate 79 and aspartate 81. Residues cysteine 94 and cysteine 101 each coordinate Zn(2+).

This sequence belongs to the PRA-CH family. In terms of assembly, homodimer. Requires Mg(2+) as cofactor. Zn(2+) serves as cofactor.

It is found in the cytoplasm. The catalysed reaction is 1-(5-phospho-beta-D-ribosyl)-5'-AMP + H2O = 1-(5-phospho-beta-D-ribosyl)-5-[(5-phospho-beta-D-ribosylamino)methylideneamino]imidazole-4-carboxamide. It functions in the pathway amino-acid biosynthesis; L-histidine biosynthesis; L-histidine from 5-phospho-alpha-D-ribose 1-diphosphate: step 3/9. Catalyzes the hydrolysis of the adenine ring of phosphoribosyl-AMP. This Cereibacter sphaeroides (strain ATCC 17025 / ATH 2.4.3) (Rhodobacter sphaeroides) protein is Phosphoribosyl-AMP cyclohydrolase.